A 184-amino-acid polypeptide reads, in one-letter code: 2-C-methyl-D-erythritol 2,4-cyclodiphosphate synthase (184 aa).

Asp-17 and His-19 together coordinate a divalent metal cation. 4-CDP-2-C-methyl-D-erythritol 2-phosphate is bound by residues 17–19 (DVH) and 47–48 (HS). Residue His-55 coordinates a divalent metal cation. 4-CDP-2-C-methyl-D-erythritol 2-phosphate contacts are provided by residues 74–78 (FPNTD), Phe-152, and Arg-155.

The protein belongs to the IspF family. In terms of assembly, homotrimer. A divalent metal cation is required as a cofactor.

The enzyme catalyses 4-CDP-2-C-methyl-D-erythritol 2-phosphate = 2-C-methyl-D-erythritol 2,4-cyclic diphosphate + CMP. The protein operates within isoprenoid biosynthesis; isopentenyl diphosphate biosynthesis via DXP pathway; isopentenyl diphosphate from 1-deoxy-D-xylulose 5-phosphate: step 4/6. Involved in the biosynthesis of isopentenyl diphosphate (IPP) and dimethylallyl diphosphate (DMAPP), two major building blocks of isoprenoid compounds. Catalyzes the conversion of 4-diphosphocytidyl-2-C-methyl-D-erythritol 2-phosphate (CDP-ME2P) to 2-C-methyl-D-erythritol 2,4-cyclodiphosphate (ME-CPP) with a corresponding release of cytidine 5-monophosphate (CMP). The sequence is that of 2-C-methyl-D-erythritol 2,4-cyclodiphosphate synthase from Anaplasma marginale (strain St. Maries).